The sequence spans 1257 residues: Neural cell adhesion molecule L1 (1257 aa).

Positions 1-19 (MVVALRYVWPLLLCSPCLL) are cleaved as a signal peptide. At 20–1120 (IQIPEEYEGH…RLPPAGFATE (1101 aa)) the chain is on the extracellular side. Ig-like C2-type domains follow at residues 35–125 (PVIT…TAMS), 139–226 (PKET…EPID), 240–328 (PRLL…YYVT), 333–420 (PYWL…AYIY), 425–507 (PAKI…NNVT), and 518–607 (TQIT…AQLL). Intrachain disulfides connect C57–C114 and C158–C209. Residues N100, N203, N247, and N294 are each glycosylated (N-linked (GlcNAc...) asparagine). 2 cysteine pairs are disulfide-bonded: C264–C312 and C354–C404. N-linked (GlcNAc...) asparagine glycosylation is found at N433, N479, N490, and N505. C448 and C497 are joined by a disulfide. A disulfide bridge links C539 with C591. Residues 554-556 (RGD) carry the Cell attachment site motif. 2 N-linked (GlcNAc...) asparagine glycosylation sites follow: N588 and N671. 5 Fibronectin type-III domains span residues 615–712 (VPRL…TPEA), 717–810 (NPVD…SGED), 814–916 (AIPE…TPEG), 920–1015 (HPEA…MALS), and 1016–1115 (GISD…LPPA). The segment at 698–725 (GEPSPVSETVVTPEAAPEKNPVDVKGEG) is disordered. Residues 713 to 725 (APEKNPVDVKGEG) show a composition bias toward basic and acidic residues. N-linked (GlcNAc...) asparagine glycans are attached at residues N726, N777, N825, N849, N876, N979, N1022, N1030, N1071, and N1105. Residues 1121-1143 (GWFIGFVSAIILLLLVLLILCFI) traverse the membrane as a helical segment. Residues 1144 to 1257 (KRSKGGKYSV…SPINPAVALE (114 aa)) are Cytoplasmic-facing. 4 positions are modified to phosphoserine: S1163, T1172, R1177, and S1178. Residues 1176–1187 (YRSLESDNEEKA) are compositionally biased toward basic and acidic residues. Disordered stretches follow at residues 1176-1207 (YRSL…SDDS) and 1226-1257 (IGQY…VALE). A Phosphoserine; by CaMK2 modification is found at S1181. A phosphoserine mark is found at S1194, S1243, S1244, and S1248. Over residues 1241-1250 (NDSSGATSPI) the composition is skewed to polar residues.

Belongs to the immunoglobulin superfamily. L1/neurofascin/NgCAM family. As to quaternary structure, interacts with SHTN1; the interaction occurs in axonal growth cones. Interacts with isoform 2 of BSG.

Its subcellular location is the cell membrane. It is found in the cell projection. It localises to the growth cone. The protein resides in the axon. The protein localises to the dendrite. Neural cell adhesion molecule involved in the dynamics of cell adhesion and in the generation of transmembrane signals at tyrosine kinase receptors. During brain development, critical in multiple processes, including neuronal migration, axonal growth and fasciculation, and synaptogenesis. In the mature brain, plays a role in the dynamics of neuronal structure and function, including synaptic plasticity. In Homo sapiens (Human), this protein is Neural cell adhesion molecule L1 (L1CAM).